Here is a 100-residue protein sequence, read N- to C-terminus: Small ribosomal subunit protein bS20 (100 aa).

This sequence belongs to the bacterial ribosomal protein bS20 family.

Its function is as follows. Binds directly to 16S ribosomal RNA. The sequence is that of Small ribosomal subunit protein bS20 from Prochlorococcus marinus (strain MIT 9211).